The primary structure comprises 513 residues: ATP synthase subunit alpha (513 aa).

169–176 serves as a coordination point for ATP; it reads GDRQTGKT.

This sequence belongs to the ATPase alpha/beta chains family. As to quaternary structure, F-type ATPases have 2 components, CF(1) - the catalytic core - and CF(0) - the membrane proton channel. CF(1) has five subunits: alpha(3), beta(3), gamma(1), delta(1), epsilon(1). CF(0) has three main subunits: a(1), b(2) and c(9-12). The alpha and beta chains form an alternating ring which encloses part of the gamma chain. CF(1) is attached to CF(0) by a central stalk formed by the gamma and epsilon chains, while a peripheral stalk is formed by the delta and b chains.

It is found in the cell inner membrane. The catalysed reaction is ATP + H2O + 4 H(+)(in) = ADP + phosphate + 5 H(+)(out). Functionally, produces ATP from ADP in the presence of a proton gradient across the membrane. The alpha chain is a regulatory subunit. The polypeptide is ATP synthase subunit alpha (Edwardsiella ictaluri (strain 93-146)).